A 69-amino-acid polypeptide reads, in one-letter code: U2-agatoxin-Ao1g (69 aa).

The N-terminal stretch at 1-20 (MKAIISLLLISAMVFSMIEA) is a signal peptide. A propeptide spanning residues 21–34 (VPVEEGLQLFEGER) is cleaved from the precursor. 3 disulfides stabilise this stretch: Cys-36–Cys-52, Cys-43–Cys-57, and Cys-51–Cys-67. Residue Leu-68 is modified to Leucine amide.

Belongs to the neurotoxin 01 (U2-agtx) family. In terms of tissue distribution, expressed by the venom gland.

Its subcellular location is the secreted. In terms of biological role, insect active toxin causing rapid but reversible paralysis in crickets. No activity shown in mammals. Does not show effect on mammalian voltage-gated calcium channels. This is U2-agatoxin-Ao1g from Agelena orientalis (Funnel-web spider).